Reading from the N-terminus, the 133-residue chain is Phosphoribosyl-AMP cyclohydrolase (133 aa).

Position 77 (aspartate 77) interacts with Mg(2+). Cysteine 78 lines the Zn(2+) pocket. Residues aspartate 79 and aspartate 81 each contribute to the Mg(2+) site. Residues cysteine 95 and cysteine 102 each contribute to the Zn(2+) site.

This sequence belongs to the PRA-CH family. In terms of assembly, homodimer. Mg(2+) is required as a cofactor. Requires Zn(2+) as cofactor.

It is found in the cytoplasm. It carries out the reaction 1-(5-phospho-beta-D-ribosyl)-5'-AMP + H2O = 1-(5-phospho-beta-D-ribosyl)-5-[(5-phospho-beta-D-ribosylamino)methylideneamino]imidazole-4-carboxamide. The protein operates within amino-acid biosynthesis; L-histidine biosynthesis; L-histidine from 5-phospho-alpha-D-ribose 1-diphosphate: step 3/9. In terms of biological role, catalyzes the hydrolysis of the adenine ring of phosphoribosyl-AMP. This Pseudomonas fluorescens (strain Pf0-1) protein is Phosphoribosyl-AMP cyclohydrolase.